A 385-amino-acid polypeptide reads, in one-letter code: Deoxyguanosinetriphosphate triphosphohydrolase-like protein (385 aa).

Residues 62–197 (RLTHSLEVAQ…VSLADDIAYS (136 aa)) form the HD domain.

The protein belongs to the dGTPase family. Type 2 subfamily.

The chain is Deoxyguanosinetriphosphate triphosphohydrolase-like protein from Neorickettsia sennetsu (strain ATCC VR-367 / Miyayama) (Ehrlichia sennetsu).